A 287-amino-acid polypeptide reads, in one-letter code: Probable endonuclease 4 (287 aa).

H69, H109, E144, D178, H181, H215, D228, H230, and E260 together coordinate Zn(2+).

The protein belongs to the AP endonuclease 2 family. The cofactor is Zn(2+).

The catalysed reaction is Endonucleolytic cleavage to 5'-phosphooligonucleotide end-products.. Endonuclease IV plays a role in DNA repair. It cleaves phosphodiester bonds at apurinic or apyrimidinic (AP) sites, generating a 3'-hydroxyl group and a 5'-terminal sugar phosphate. In Thermotoga maritima (strain ATCC 43589 / DSM 3109 / JCM 10099 / NBRC 100826 / MSB8), this protein is Probable endonuclease 4.